The sequence spans 701 residues: Ribosomal RNA large subunit methyltransferase K/L (701 aa).

The THUMP domain occupies 43-155 (LLYKSLMWSR…NNILHIMLDL (113 aa)).

It belongs to the methyltransferase superfamily. RlmKL family.

The protein resides in the cytoplasm. It catalyses the reaction guanosine(2445) in 23S rRNA + S-adenosyl-L-methionine = N(2)-methylguanosine(2445) in 23S rRNA + S-adenosyl-L-homocysteine + H(+). The catalysed reaction is guanosine(2069) in 23S rRNA + S-adenosyl-L-methionine = N(2)-methylguanosine(2069) in 23S rRNA + S-adenosyl-L-homocysteine + H(+). Functionally, specifically methylates the guanine in position 2445 (m2G2445) and the guanine in position 2069 (m7G2069) of 23S rRNA. This is Ribosomal RNA large subunit methyltransferase K/L from Buchnera aphidicola subsp. Acyrthosiphon pisum (strain APS) (Acyrthosiphon pisum symbiotic bacterium).